The following is a 924-amino-acid chain: Inositol polyphosphate 4-phosphatase type II (924 aa).

Over residues 1–13 (MEIKEEGASEEGQ) the composition is skewed to basic and acidic residues. Disordered regions lie at residues 1 to 24 (MEIK…ANDP), 481 to 516 (ILKK…HSDY), and 546 to 570 (DGGS…AIPS). The C2 domain occupies 23-165 (DPGDCQFTSI…LKSKEQLLVL (143 aa)).

Belongs to the inositol 3,4-bisphosphate 4-phosphatase family. In terms of tissue distribution, widely expressed with highest levels occurring in the skeletal muscle and heart.

The enzyme catalyses a 1,2-diacyl-sn-glycero-3-phospho-(1D-myo-inositol-3,4-bisphosphate) + H2O = a 1,2-diacyl-sn-glycero-3-phospho-(1D-myo-inositol-3-phosphate) + phosphate. It catalyses the reaction 1D-myo-inositol 1,3,4-trisphosphate + H2O = 1D-myo-inositol 1,3-bisphosphate + phosphate. The catalysed reaction is 1D-myo-inositol 3,4-bisphosphate + H2O = 1D-myo-inositol 3-phosphate + phosphate. Its pathway is signal transduction; phosphatidylinositol signaling pathway. With respect to regulation, strongly inhibited by inositol hexakisphosphate. Catalyzes the hydrolysis of the 4-position phosphate of phosphatidylinositol 3,4-bisphosphate, inositol 1,3,4-trisphosphate and inositol 3,4-trisphosphate. Plays a role in the late stages of macropinocytosis by dephosphorylating phosphatidylinositol 3,4-bisphosphate in membrane ruffles. The lipid phosphatase activity is critical for tumor suppressor function. Antagonizes the PI3K-AKT/PKB signaling pathway by dephosphorylating phosphoinositides and thereby modulating cell cycle progression and cell survival. This Homo sapiens (Human) protein is Inositol polyphosphate 4-phosphatase type II (INPP4B).